Here is a 388-residue protein sequence, read N- to C-terminus: Succinate--CoA ligase [ADP-forming] subunit beta (388 aa).

Positions 9–244 (KSLFAEYGLP…PSQDDAREAH (236 aa)) constitute an ATP-grasp domain. Residues lysine 46, 53 to 55 (GRG), glutamate 99, threonine 102, and glutamate 107 each bind ATP. Mg(2+)-binding residues include asparagine 199 and aspartate 213. Substrate contacts are provided by residues asparagine 264 and 321 to 323 (GIV).

It belongs to the succinate/malate CoA ligase beta subunit family. In terms of assembly, heterotetramer of two alpha and two beta subunits. It depends on Mg(2+) as a cofactor.

The catalysed reaction is succinate + ATP + CoA = succinyl-CoA + ADP + phosphate. It catalyses the reaction GTP + succinate + CoA = succinyl-CoA + GDP + phosphate. The protein operates within carbohydrate metabolism; tricarboxylic acid cycle; succinate from succinyl-CoA (ligase route): step 1/1. Its function is as follows. Succinyl-CoA synthetase functions in the citric acid cycle (TCA), coupling the hydrolysis of succinyl-CoA to the synthesis of either ATP or GTP and thus represents the only step of substrate-level phosphorylation in the TCA. The beta subunit provides nucleotide specificity of the enzyme and binds the substrate succinate, while the binding sites for coenzyme A and phosphate are found in the alpha subunit. This Shewanella sp. (strain ANA-3) protein is Succinate--CoA ligase [ADP-forming] subunit beta.